Consider the following 434-residue polypeptide: Sensor histidine kinase Hik2 (434 aa).

In terms of domain architecture, GAF spans Ile16–Ala152. Cys19 contributes to the [3Fe-4S] cluster binding site. A Histidine kinase domain is found at Asp182–Glu432. His185 is subject to Phosphohistidine; by autocatalysis. The short motif at Asp357 to Gly361 is the G1 box element. Residues Gly386 to Gly390 carry the G2 box motif.

It belongs to the chloroplast sensor kinase protein family. Exists as monomers, tetramers, hexamers and other higher-order oligomers; all are able to autophosphorylate. Upon treatment with 0.5 M NaCl only tetramers are seen, which are probably inactive. Interacts with both RppA and Rre1. The cofactor is [3Fe-4S] cluster. In terms of processing, autophosphorylates, probably on His-185.

The protein resides in the cytoplasm. It catalyses the reaction ATP + protein L-histidine = ADP + protein N-phospho-L-histidine.. With respect to regulation, autophosphorylation is inhibited by Na(+) but not by Cl(-). Reducing agents dithionite, duroquinol and decyl-plastoquinone, but not NADPH or ferredoxin inhibit autophosphorylation. Oxidation of the Fe-S cluster (with potassium ferricyanide) induces a conformational change that is conducive to its autophosphorylation activity. Functionally, member of possibly 2 two-component regulatory system(s) Hik2/Rre1 and Hik2/RppA. Transduces PQ (plastoquinone) redox signals to photosystem gene expression machinery during the adjustment of photosystem stoichiometry. Reduced PQ suppresses its autophosphorylation activity (i.e. kinase activity is higher under oxidizing conditions). Member of two-component regulatory system Hik2/Rre1, controls expression of sigB (sll0306), sll0528, slr1119, slr0852 and ssr3188 in response to hyperosmotic stress. Activity responds to high salt (with a linear response as concentrations rise to 0.5 M NaCl); detects Cl(-) levels. Autophosphorylates and transfers phosphate to Rre1. May transfer phosphate to RppA in a possible Hik2/RppA two-component system. The sequence is that of Sensor histidine kinase Hik2 from Synechocystis sp. (strain ATCC 27184 / PCC 6803 / Kazusa).